Consider the following 392-residue polypeptide: Succinyl-diaminopimelate desuccinylase (392 aa).

His-77 contributes to the Zn(2+) binding site. Asp-79 is a catalytic residue. Asp-110 serves as a coordination point for Zn(2+). The active-site Proton acceptor is the Glu-144. The Zn(2+) site is built by Glu-145, Glu-173, and His-359.

The protein belongs to the peptidase M20A family. DapE subfamily. As to quaternary structure, homodimer. It depends on Zn(2+) as a cofactor. Requires Co(2+) as cofactor.

The enzyme catalyses N-succinyl-(2S,6S)-2,6-diaminopimelate + H2O = (2S,6S)-2,6-diaminopimelate + succinate. The protein operates within amino-acid biosynthesis; L-lysine biosynthesis via DAP pathway; LL-2,6-diaminopimelate from (S)-tetrahydrodipicolinate (succinylase route): step 3/3. In terms of biological role, catalyzes the hydrolysis of N-succinyl-L,L-diaminopimelic acid (SDAP), forming succinate and LL-2,6-diaminopimelate (DAP), an intermediate involved in the bacterial biosynthesis of lysine and meso-diaminopimelic acid, an essential component of bacterial cell walls. The polypeptide is Succinyl-diaminopimelate desuccinylase (Thiobacillus denitrificans (strain ATCC 25259 / T1)).